We begin with the raw amino-acid sequence, 209 residues long: Ras-like protein (209 aa).

10-17 (GGGLVGKS) contacts GTP. The Effector region motif lies at 55–63 (YDPTVEDSR). The residue at position 58 (Thr58) is a Phosphothreonine. GTP-binding positions include 79–83 (DTAGQ) and 140–143 (NKAD). Cys206 bears the Cysteine methyl ester mark. Cys206 carries the S-geranylgeranyl cysteine lipid modification. Residues 207–209 (LII) constitute a propeptide, removed in mature form.

It belongs to the small GTPase superfamily. Ras family. Phosphorylated in the presence of insulin.

The protein resides in the cell membrane. The catalysed reaction is GTP + H2O = GDP + phosphate + H(+). Its activity is regulated as follows. Alternates between an inactive form bound to GDP and an active form bound to GTP. Activated by a guanine nucleotide-exchange factor (GEF) and inactivated by a GTPase-activating protein (GAP). In terms of biological role, this protein is activated by the insulin/insulin (insulin-like)-receptor system. This transition enables the ras protein to interact with the lectin-receptor/lectin complex, a process which ultimately lead to an initiation of an intra-cellular signal-transduction chain. This Geodia cydonium (Sponge) protein is Ras-like protein.